A 107-amino-acid polypeptide reads, in one-letter code: Ribosome-associated factor Y (107 aa).

Residues 85–107 (LNKLQHKSESRRADERLKDSFEN) form a disordered region.

As to quaternary structure, associates mainly with 70S ribosomes.

Its function is as follows. During stationary phase, prevents 70S dimer formation, probably in order to regulate translation efficiency during transition between the exponential and the stationary phases. In addition, during environmental stress such as cold shock or excessive cell density at stationary phase, stabilizes the 70S ribosome against dissociation, inhibits translation initiation and increase translation accuracy. When normal growth conditions are restored, is quickly released from the ribosome. In Haemophilus influenzae (strain ATCC 51907 / DSM 11121 / KW20 / Rd), this protein is Ribosome-associated factor Y.